The primary structure comprises 576 residues: Arginine--tRNA ligase (576 aa).

A 'HIGH' region motif is present at residues 122-132 (PNVAKEMHVGH).

This sequence belongs to the class-I aminoacyl-tRNA synthetase family. As to quaternary structure, monomer.

It localises to the cytoplasm. It catalyses the reaction tRNA(Arg) + L-arginine + ATP = L-arginyl-tRNA(Arg) + AMP + diphosphate. This Thermobifida fusca (strain YX) protein is Arginine--tRNA ligase.